A 443-amino-acid polypeptide reads, in one-letter code: Zinc finger protein 713 (443 aa).

Polar residues predominate over residues 1–10 (MPSQNAVFSQ). 2 disordered regions span residues 1–23 (MPSQ…NDGS) and 99–118 (DTHP…TSQN). Residues 32-102 (LTFQDVAVDF…ERDSLLDTHP (71 aa)) enclose the KRAB domain. Residues 99–112 (DTHPDGENRPEIKK) are compositionally biased toward basic and acidic residues. A C2H2-type 1; degenerate zinc finger spans residues 255 to 280 (HTAEKPSECGKAFSHTSSLSQPQMLL). 5 consecutive C2H2-type zinc fingers follow at residues 286-308 (YKCD…QRIH), 314-336 (FICN…LRIH), 342-364 (YKCN…HRLH), 370-392 (YECG…ERTH), and 398-420 (YKCN…RKIH).

The protein belongs to the krueppel C2H2-type zinc-finger protein family. As to expression, expressed in fetal and adult brain.

It is found in the nucleus. In terms of biological role, may be involved in transcriptional regulation. The protein is Zinc finger protein 713 of Homo sapiens (Human).